Consider the following 356-residue polypeptide: 3-isopropylmalate dehydrogenase (356 aa).

Positions 95, 105, 133, and 223 each coordinate substrate. Mg(2+) contacts are provided by D223, D247, and D251. 281 to 293 provides a ligand contact to NAD(+); it reads GSAPDIAGQNKAN.

It belongs to the isocitrate and isopropylmalate dehydrogenases family. LeuB type 1 subfamily. In terms of assembly, homodimer. The cofactor is Mg(2+). Mn(2+) serves as cofactor.

It localises to the cytoplasm. It catalyses the reaction (2R,3S)-3-isopropylmalate + NAD(+) = 4-methyl-2-oxopentanoate + CO2 + NADH. Its pathway is amino-acid biosynthesis; L-leucine biosynthesis; L-leucine from 3-methyl-2-oxobutanoate: step 3/4. Catalyzes the oxidation of 3-carboxy-2-hydroxy-4-methylpentanoate (3-isopropylmalate) to 3-carboxy-4-methyl-2-oxopentanoate. The product decarboxylates to 4-methyl-2 oxopentanoate. In Neisseria meningitidis serogroup B (strain ATCC BAA-335 / MC58), this protein is 3-isopropylmalate dehydrogenase.